We begin with the raw amino-acid sequence, 1119 residues long: SH3 and PX domain-containing protein 2A (1119 aa).

The 125-residue stretch at 4-128 (RTVLDVKVVD…RFFETKPDDI (125 aa)) folds into the PX domain. SH3 domains are found at residues 149–208 (MVLE…SQSG) and 249–308 (SREE…KLKD). 5 disordered regions span residues 388 to 429 (SSAT…PPRR), 494 to 595 (APSS…SNPA), 641 to 815 (SSDD…HESV), 914 to 941 (NLRSMSNPSPPIPSKPPGGFSKPTAMLN), and 957 to 1004 (RPQS…SSFT). An SH3 3 domain is found at 445-504 (TVEAEYYTIAEFQSSISDGISFRGGQKADVIEKNSGGWWYVQIGDTEGWAPSSYIDKRKK). 2 stretches are compositionally biased toward basic and acidic residues: residues 581–590 (PKPEPRKFEI) and 688–718 (GRAERHSSKLFSDESARNPKREPVMRKDVEI). Over residues 779–802 (TASVVSSEDSTSSRSTSDLSSVYS) the composition is skewed to low complexity. The span at 806 to 815 (RGGESDHESV) shows a compositional bias: basic and acidic residues. The SH3 4 domain occupies 812-871 (HESVLFRTTDAYERAQESELSFPAGVEVEVLEKQESGWWFVRWGSDEGWVPTFYLEPIKH). One can recognise an SH3 5 domain in the interval 1058–1119 (NLREVYVSIA…VPSNYLERKK (62 aa)).

It belongs to the SH3PXD2 family. Post-translationally, tyrosine phosphorylated.

It localises to the cytoplasm. The protein localises to the cell projection. The protein resides in the podosome. Adapter protein involved in invadopodia and podosome formation and extracellular matrix degradation. The sequence is that of SH3 and PX domain-containing protein 2A (sh3pxd2a) from Danio rerio (Zebrafish).